Consider the following 545-residue polypeptide: Methionine--tRNA ligase (545 aa).

The short motif at 13 to 23 (PYANGPLHIGH) is the 'HIGH' region element. The Zn(2+) site is built by Cys-144, Cys-147, Cys-157, and Cys-160. Residues 330-334 (KISKS) carry the 'KMSKS' region motif. Lys-333 is a binding site for ATP.

Belongs to the class-I aminoacyl-tRNA synthetase family. MetG type 1 subfamily. Monomer. Zn(2+) is required as a cofactor.

It localises to the cytoplasm. It catalyses the reaction tRNA(Met) + L-methionine + ATP = L-methionyl-tRNA(Met) + AMP + diphosphate. In terms of biological role, is required not only for elongation of protein synthesis but also for the initiation of all mRNA translation through initiator tRNA(fMet) aminoacylation. This Blochmanniella floridana protein is Methionine--tRNA ligase.